A 234-amino-acid polypeptide reads, in one-letter code: Nitroreductase NfnB (234 aa).

25–29 is an FMN binding site; that stretch reads RRAVR. Residues Ser-55, Arg-105, Tyr-113, and Ile-118 each contribute to the NADP(+) site. FMN-binding positions include Tyr-137, 181 to 182, and Arg-223; that span reads AL.

The protein belongs to the nitroreductase family. In terms of assembly, homodimer. Requires FMN as cofactor.

Confers resistance to antitubercular drugs benzothiazinone (BTZ) and dinitrobenzamide (DNB). Inactivates BTZ and DNB by reducing an essential nitro group of these compounds to amino group or to hydroxyl amine, respectively, using NADH or NADPH as source of reducing equivalents; two electrons are transferred. Able to reduce the nitro group of bicyclic nitroimidazole PA-824, but not of quinone menadione, nitrofurazone, methyl-4-nitrobenzoate, 4-nitrobenzene methyl sulfonate or 4-nitroacetophenone. This Mycolicibacterium smegmatis (strain ATCC 700084 / mc(2)155) (Mycobacterium smegmatis) protein is Nitroreductase NfnB.